We begin with the raw amino-acid sequence, 435 residues long: Asparagine--tRNA ligase (435 aa).

It belongs to the class-II aminoacyl-tRNA synthetase family. As to quaternary structure, homodimer.

The protein localises to the cytoplasm. It carries out the reaction tRNA(Asn) + L-asparagine + ATP = L-asparaginyl-tRNA(Asn) + AMP + diphosphate + H(+). This chain is Asparagine--tRNA ligase, found in Leptospira borgpetersenii serovar Hardjo-bovis (strain JB197).